A 729-amino-acid polypeptide reads, in one-letter code: Receptor-like protein 2 (729 aa).

Positions 1–44 are cleaved as a signal peptide; sequence MRSKAKGLVRPLITKPVQPLSSHMHLFLLCILFLSALFLTLSEA. The interval 45 to 82 is N-cap; that stretch reads VCNLQDRESLIWFSGNVSSSVSPLNWNLSIDCCSWEGI. The Extracellular portion of the chain corresponds to 45 to 707; that stretch reads VCNLQDRESL…AKENDELNRT (663 aa). N-linked (GlcNAc...) asparagine glycans are attached at residues Asn60 and Asn71. 20 LRR repeats span residues 89-113, 114-137, 139-163, 168-193, 195-219, 220-244, 245-268, 269-292, 293-316, 317-340, 342-364, 365-389, 391-413, 414-437, 439-464, 468-492, 493-515, 516-540, 542-560, and 561-584; these read DSHV…VQNI, HRLS…FFST, DQLM…AFGN, FFSI…VYLQ, TINL…MCRS, SPQL…LGRC, LRLT…IYNL, SELE…ITRL, RKLT…IGNL, SSLR…LANC, KLVK…EFSQ, LQSL…IFSC, SLTA…VLEL, ESLS…SILQ, CRKL…DFLS, FPKL…LINL, NKVE…WLGT, LPDL…LFQL, ALMS…PIFL, and NPNN…IYIR. Residues Asn145 and Asn163 are each glycosylated (N-linked (GlcNAc...) asparagine). 2 N-linked (GlcNAc...) asparagine glycosylation sites follow: Asn202 and Asn205. 6 N-linked (GlcNAc...) asparagine glycosylation sites follow: Asn256, Asn267, Asn288, Asn315, Asn330, and Asn339. A glycan (N-linked (GlcNAc...) asparagine) is linked at Asn375. The N-linked (GlcNAc...) asparagine glycan is linked to Asn428. Residues Asn564, Asn587, Asn611, Asn622, Asn635, Asn657, and Asn705 are each glycosylated (N-linked (GlcNAc...) asparagine). 3 LRR repeats span residues 599–623, 624–647, and 649–672; these read LKVL…LSNL, TNLE…LTNL, and FLSY…QFDT. The tract at residues 690 to 707 is C-cap/acidic domain; that stretch reads LTSCKPTRAKENDELNRT. A helical membrane pass occupies residues 708–728; that stretch reads FLMGIAIGYFLSFVSILVVRA. Residue Trp729 is a topological domain, cytoplasmic.

Belongs to the RLP family.

The protein localises to the cell membrane. Involved in the perception of CLV3 and CLV3-like peptides, that act as extracellular signals regulating meristems maintenance. This is Receptor-like protein 2 from Arabidopsis thaliana (Mouse-ear cress).